The chain runs to 384 residues: GDSL esterase/lipase ENOD8 (384 aa).

Residues 1–31 (MKFMAKIELSRHIPLVTLIVLVLCITPPIFA) form the signal peptide. The active-site Nucleophile is the S46. N-linked (GlcNAc...) asparagine glycans are attached at residues N105, N191, N198, N276, and N330. Residues D349 and H352 contribute to the active site.

It belongs to the 'GDSL' lipolytic enzyme family. Expressed in root nodules (at protein level).

The protein resides in the symbiosome. In terms of biological role, has lipase and esterase activities. Probably involved in root nodule physiology. The protein is GDSL esterase/lipase ENOD8 of Medicago truncatula (Barrel medic).